Here is a 305-residue protein sequence, read N- to C-terminus: Tyrosine recombinase XerC (305 aa).

The Core-binding (CB) domain occupies 4 to 95 (TSIQALINKW…AVKNFYRFLE (92 aa)). The Tyr recombinase domain maps to 116–298 (LLPKALSEDD…SIKHLEAVYT (183 aa)). Active-site residues include arginine 159, lysine 182, histidine 250, arginine 253, and histidine 276. The active-site O-(3'-phospho-DNA)-tyrosine intermediate is tyrosine 285.

This sequence belongs to the 'phage' integrase family. XerC subfamily. As to quaternary structure, forms a cyclic heterotetrameric complex composed of two molecules of XerC and two molecules of XerD.

It is found in the cytoplasm. Its function is as follows. Site-specific tyrosine recombinase, which acts by catalyzing the cutting and rejoining of the recombining DNA molecules. The XerC-XerD complex is essential to convert dimers of the bacterial chromosome into monomers to permit their segregation at cell division. It also contributes to the segregational stability of plasmids. The protein is Tyrosine recombinase XerC of Rickettsia peacockii (strain Rustic).